A 291-amino-acid polypeptide reads, in one-letter code: Methionine aminopeptidase (291 aa).

H118 is a substrate binding site. A divalent metal cation contacts are provided by D135, D146, and H209. H216 provides a ligand contact to substrate. Residues E241 and E273 each contribute to the a divalent metal cation site.

This sequence belongs to the peptidase M24A family. Methionine aminopeptidase type 1 subfamily. Monomer. Requires Co(2+) as cofactor. It depends on Zn(2+) as a cofactor. Mn(2+) is required as a cofactor. The cofactor is Fe(2+).

The catalysed reaction is Release of N-terminal amino acids, preferentially methionine, from peptides and arylamides.. Removes the N-terminal methionine from nascent proteins. The N-terminal methionine is often cleaved when the second residue in the primary sequence is small and uncharged (Met-Ala-, Cys, Gly, Pro, Ser, Thr, or Val). Requires deformylation of the N(alpha)-formylated initiator methionine before it can be hydrolyzed. The sequence is that of Methionine aminopeptidase from Chlamydia muridarum (strain MoPn / Nigg).